The primary structure comprises 250 residues: Small ribosomal subunit protein uS2 (250 aa).

Belongs to the universal ribosomal protein uS2 family.

The protein is Small ribosomal subunit protein uS2 of Acidovorax sp. (strain JS42).